The chain runs to 547 residues: Chaperonin GroEL (547 aa).

ATP contacts are provided by residues 30-33 (TLGP), Lys-51, 87-91 (DGTTT), Gly-415, 479-481 (NAA), and Asp-495.

The protein belongs to the chaperonin (HSP60) family. As to quaternary structure, forms a cylinder of 14 subunits composed of two heptameric rings stacked back-to-back. Interacts with the co-chaperonin GroES.

Its subcellular location is the cytoplasm. It catalyses the reaction ATP + H2O + a folded polypeptide = ADP + phosphate + an unfolded polypeptide.. Its function is as follows. Together with its co-chaperonin GroES, plays an essential role in assisting protein folding. The GroEL-GroES system forms a nano-cage that allows encapsulation of the non-native substrate proteins and provides a physical environment optimized to promote and accelerate protein folding. The chain is Chaperonin GroEL from Marinomonas sp. (strain MWYL1).